A 647-amino-acid polypeptide reads, in one-letter code: DNA ligase (647 aa).

NAD(+)-binding positions include 30 to 34, 79 to 80, and E105; these read DEEYD and SM. K107 acts as the N6-AMP-lysine intermediate in catalysis. R128, E162, and K301 together coordinate NAD(+). Positions 395, 398, 411, and 416 each coordinate Zn(2+). The region spanning 570 to 647 is the BRCT domain; that stretch reads KSDSVIFGKT…ESAFNELVKE (78 aa).

Belongs to the NAD-dependent DNA ligase family. LigA subfamily. The cofactor is Mg(2+). Mn(2+) serves as cofactor.

It carries out the reaction NAD(+) + (deoxyribonucleotide)n-3'-hydroxyl + 5'-phospho-(deoxyribonucleotide)m = (deoxyribonucleotide)n+m + AMP + beta-nicotinamide D-nucleotide.. DNA ligase that catalyzes the formation of phosphodiester linkages between 5'-phosphoryl and 3'-hydroxyl groups in double-stranded DNA using NAD as a coenzyme and as the energy source for the reaction. It is essential for DNA replication and repair of damaged DNA. In Campylobacter jejuni subsp. doylei (strain ATCC BAA-1458 / RM4099 / 269.97), this protein is DNA ligase.